We begin with the raw amino-acid sequence, 453 residues long: Ferruginol synthase (453 aa).

The chain crosses the membrane as a helical span at residues 15-35; it reads LSKKYGPLMSIHLGSLYTVIV. Cys397 is a heme binding site.

It belongs to the cytochrome P450 family. Heme is required as a cofactor. Expressed in leaf glandular trichomes.

The protein resides in the membrane. It catalyses the reaction abieta-8,11,13-triene + reduced [NADPH--hemoprotein reductase] + O2 = ferruginol + oxidized [NADPH--hemoprotein reductase] + H2O + H(+). The enzyme catalyses ferruginol + reduced [NADPH--hemoprotein reductase] + O2 = 11-hydroxyferruginol + oxidized [NADPH--hemoprotein reductase] + H2O + H(+). It carries out the reaction miltiradiene + 2 reduced [NADPH--hemoprotein reductase] + 2 O2 = 11-oxomiltiradiene + 2 oxidized [NADPH--hemoprotein reductase] + 3 H2O + 2 H(+). Its pathway is secondary metabolite biosynthesis; terpenoid biosynthesis. Functionally, monooxygenase involved in the biosynthesis of labdane-related diterpenes natural products. Catalyzes the oxidation of abietatriene to produce ferruginol. Ferruginol is an intermediate in the biosynthesis of carnosate, a potent antioxidant. May also convert miltiradiene into 11-oxomiltiradiene. The sequence is that of Ferruginol synthase from Salvia pomifera (Apple sage).